Consider the following 160-residue polypeptide: GTP-dependent dephospho-CoA kinase (160 aa).

7 residues coordinate GTP: Asp45, Ile46, Val47, Asp59, Lys61, Glu108, and Asp130.

The protein belongs to the GTP-dependent DPCK family.

The catalysed reaction is 3'-dephospho-CoA + GTP = GDP + CoA + H(+). Its pathway is cofactor biosynthesis; coenzyme A biosynthesis. Its function is as follows. Catalyzes the GTP-dependent phosphorylation of the 3'-hydroxyl group of dephosphocoenzyme A to form coenzyme A (CoA). The polypeptide is GTP-dependent dephospho-CoA kinase (Staphylothermus marinus (strain ATCC 43588 / DSM 3639 / JCM 9404 / F1)).